Here is a 345-residue protein sequence, read N- to C-terminus: 3-isopropylmalate dehydrogenase (345 aa).

NAD(+) is bound at residue 74–87 (GPKWDGLPRKISPE). Residues Arg-94, Arg-104, Arg-132, and Asp-217 each coordinate substrate. Residues Asp-217, Asp-241, and Asp-245 each contribute to the Mg(2+) site. Residue 274 to 286 (GSAPDIAGKGIAN) participates in NAD(+) binding.

This sequence belongs to the isocitrate and isopropylmalate dehydrogenases family. LeuB type 1 subfamily. In terms of assembly, homodimer. Mg(2+) serves as cofactor. Mn(2+) is required as a cofactor.

The protein resides in the cytoplasm. The catalysed reaction is (2R,3S)-3-isopropylmalate + NAD(+) = 4-methyl-2-oxopentanoate + CO2 + NADH. It functions in the pathway amino-acid biosynthesis; L-leucine biosynthesis; L-leucine from 3-methyl-2-oxobutanoate: step 3/4. Catalyzes the oxidation of 3-carboxy-2-hydroxy-4-methylpentanoate (3-isopropylmalate) to 3-carboxy-4-methyl-2-oxopentanoate. The product decarboxylates to 4-methyl-2 oxopentanoate. The protein is 3-isopropylmalate dehydrogenase (leuB) of Thermus thermophilus.